Consider the following 161-residue polypeptide: Nucleotide-binding protein Bphy_0527 (161 aa).

It belongs to the YajQ family.

In terms of biological role, nucleotide-binding protein. The sequence is that of Nucleotide-binding protein Bphy_0527 from Paraburkholderia phymatum (strain DSM 17167 / CIP 108236 / LMG 21445 / STM815) (Burkholderia phymatum).